A 229-amino-acid chain; its full sequence is Allatostatin-A (229 aa).

The first 18 residues, 1 to 18 (MLSTSLPVCFLVIGAALC), serve as a signal peptide directing secretion. A propeptide spanning residues 19 to 48 (APERMQNDPDPHDSTAQGSDNHSDHIAPLA) is cleaved from the precursor. The interval 23-46 (MQNDPDPHDSTAQGSDNHSDHIAP) is disordered. Leu58 bears the Leucine amide mark. The propeptide occupies 62 to 80 (AYSYVSEYKRLPVYNFGLG). Position 90 is a leucine amide (Leu90). The propeptide occupies 94–130 (SVDEDQTNDDQQQIMNNDLDQAALAEFFDQYDDAGYE). A Leucine amide modification is found at Leu140. Positions 144 to 152 (FADDDTSEE) are excised as a propeptide. Residues Leu162, Leu173, Leu184, Leu196, and Leu210 each carry the leucine amide modification. A propeptide spanning residues 214 to 229 (SADDASTEDSDNYFDV) is cleaved from the precursor.

The protein belongs to the allatostatin family. As to expression, allatostatin-A-1: Expressed in antennal lobe (AL), corpora cardiaca (CC), corpora allata (CA) and gnathal ganglion (GNG) (at protein level). Expression in AL and GNG detected in most animals, in CC and CA in some animals (at protein level). Allatostatin-A-3: Expressed in antennal lobe (AL), corpora cardiaca (CC), corpora allata (CA) and gnathal ganglion (GNG) (at protein level). Expression in AL detected in all animals, in GNG, CC and CA in most animals (at protein level). Allatostatin-A-4: Expressed in antennal lobe (AL), corpora cardiaca (CC), corpora allata (CA) and gnathal ganglion (GNG) in all animals (at protein level). Allatostatin-A-5: Expressed in antennal lobe (AL), corpora cardiaca (CC), corpora allata (CA) and gnathal ganglion (GNG) in all animals (at protein level). Allatostatin-A-6: Expressed in antennal lobe (AL) and gnathal ganglion (GNG) (at protein level). Expression in AL detected in some animals, in GNG in few animals (at protein level). Not expressed in corpora cardiaca (CC) and corpora allata (CA) (at protein level). Allatostatin-A-7: Expressed in antennal lobe (AL), corpora cardiaca (CC), corpora allata (CA) and gnathal ganglion (GNG) (at protein level). Expression in AL detected in all animals, in GNG, CC and CA in most animals (at protein level). Allatostatin-A-8: Expressed in antennal lobe (AL), corpora cardiaca (CC), corpora allata (CA) and gnathal ganglion (GNG) (at protein level). Expression in AL detected in all animals, in GNG, CC and CA in most animals (at protein level). Allatostatin-A-9: Expressed in antennal lobe (AL), corpora cardiaca (CC), corpora allata (CA) and gnathal ganglion (GNG) (at protein level). Expression in AL detected in all animals, in GNG in most animals and in CC and CA in some animals (at protein level).

It localises to the secreted. Its function is as follows. Neuropeptide inhibitors of juvenile hormone synthesis and gut muscle contraction. The sequence is that of Allatostatin-A from Agrotis ipsilon (Black cutworm moth).